Consider the following 141-residue polypeptide: Nucleoside diphosphate kinase (141 aa).

ATP is bound by residues K11, F59, R87, T93, R104, and N114. The Pros-phosphohistidine intermediate role is filled by H117.

It belongs to the NDK family. In terms of assembly, homotetramer. Mg(2+) serves as cofactor.

It is found in the cytoplasm. The catalysed reaction is a 2'-deoxyribonucleoside 5'-diphosphate + ATP = a 2'-deoxyribonucleoside 5'-triphosphate + ADP. It carries out the reaction a ribonucleoside 5'-diphosphate + ATP = a ribonucleoside 5'-triphosphate + ADP. In terms of biological role, major role in the synthesis of nucleoside triphosphates other than ATP. The ATP gamma phosphate is transferred to the NDP beta phosphate via a ping-pong mechanism, using a phosphorylated active-site intermediate. This chain is Nucleoside diphosphate kinase, found in Histophilus somni (strain 129Pt) (Haemophilus somnus).